Reading from the N-terminus, the 424-residue chain is Serine--tRNA ligase (424 aa).

Thr230 to Glu232 contacts L-serine. Arg261–Glu263 lines the ATP pocket. Glu284 serves as a coordination point for L-serine. Glu348–Ser351 provides a ligand contact to ATP. Ser384 contributes to the L-serine binding site.

This sequence belongs to the class-II aminoacyl-tRNA synthetase family. Type-1 seryl-tRNA synthetase subfamily. Homodimer. The tRNA molecule binds across the dimer.

Its subcellular location is the cytoplasm. It catalyses the reaction tRNA(Ser) + L-serine + ATP = L-seryl-tRNA(Ser) + AMP + diphosphate + H(+). It carries out the reaction tRNA(Sec) + L-serine + ATP = L-seryl-tRNA(Sec) + AMP + diphosphate + H(+). It participates in aminoacyl-tRNA biosynthesis; selenocysteinyl-tRNA(Sec) biosynthesis; L-seryl-tRNA(Sec) from L-serine and tRNA(Sec): step 1/1. In terms of biological role, catalyzes the attachment of serine to tRNA(Ser). Is also able to aminoacylate tRNA(Sec) with serine, to form the misacylated tRNA L-seryl-tRNA(Sec), which will be further converted into selenocysteinyl-tRNA(Sec). The protein is Serine--tRNA ligase of Streptococcus pneumoniae serotype 19F (strain G54).